The primary structure comprises 173 residues: Alpha-crystallin A chain (173 aa).

An N-acetylmethionine modification is found at Met-1. One can recognise a sHSP domain in the interval 52–164; that stretch reads LFRSVLESGI…SDRPIPVARE (113 aa). Residues His-100, Glu-102, His-107, and His-154 each contribute to the Zn(2+) site. Residues 152-173 are disordered; it reads TIHSDRPIPVAREEKPTSAPSS. Over residues 153–167 the composition is skewed to basic and acidic residues; that stretch reads IHSDRPIPVAREEKP.

It belongs to the small heat shock protein (HSP20) family. In terms of assembly, heteropolymer composed of three CRYAA and one CRYAB subunits. Inter-subunit bridging via zinc ions enhances stability, which is crucial as there is no protein turn over in the lens. Can also form homodimers and homotetramers (dimers of dimers) which serve as the building blocks of homooligomers. Within homooligomers, the zinc-binding motif is created from residues of 3 different molecules. His-100 and Glu-102 from one molecule are ligands of the zinc ion, and His-107 and His-154 residues from additional molecules complete the site with tetrahedral coordination geometry.

It is found in the cytoplasm. The protein resides in the nucleus. In terms of biological role, contributes to the transparency and refractive index of the lens. May act as a chaperone, preventing aggregation of various proteins under a wide range of stress conditions. The polypeptide is Alpha-crystallin A chain (CRYAA) (Alligator mississippiensis (American alligator)).